The sequence spans 25 residues: Caerin 2.1 (25 aa).

Expressed by the skin dorsal glands.

It localises to the secreted. In terms of biological role, antibacterial peptide with narrow spectrum of activity. Active against the Gram-negative bacterium P.multocida (MIC=25 ug/ml). Inhibits the formation of NO by neuronal nitric oxide synthase with an IC(50) of 9 ug/ml. This is Caerin 2.1 from Litoria peronii (Emerald spotted tree frog).